Reading from the N-terminus, the 247-residue chain is MLVLRSALTRALASRTLAPQMCSSFATGPRQYDGIFYEFRSYYLKPSKMNEFLENFEKNAHLRTAHSELVGYWSVEFGGRMNTVFHIWKYDNFAHRTEVRKALAKDKEWQEQFLIPNLALIDKQESEITYLVPWCKLEKPPKEGVYELATFQMKPGGPALWGDAFKRAVHAHVNLGYTKLVGVFHTEYGALNRVHVLWWNESADSRAAGRHKSHEDPRVVAAVRESVNYLVSQQNMLLIPTSFSPLK.

N6-acetyllysine is present on residues lysine 48 and lysine 166.

The protein belongs to the NipSnap family. As to quaternary structure, interacts with the Salmonella typhimurium virulence protein spiC. In terms of tissue distribution, ubiquitous. Highly expressed in liver, kidney and muscle. Expressed at intermediate level in brain, heart, colon, thymus, kidney, small intestine, placenta, lung, leukocytes and spleen.

It is found in the cytoplasm. The protein resides in the cytosol. This Homo sapiens (Human) protein is Protein NipSnap homolog 3A (NIPSNAP3A).